Consider the following 306-residue polypeptide: Acetylglutamate kinase (306 aa).

Substrate is bound by residues 68–69 (GG), arginine 90, and asparagine 195.

The protein belongs to the acetylglutamate kinase family. ArgB subfamily.

It is found in the cytoplasm. The enzyme catalyses N-acetyl-L-glutamate + ATP = N-acetyl-L-glutamyl 5-phosphate + ADP. The protein operates within amino-acid biosynthesis; L-arginine biosynthesis; N(2)-acetyl-L-ornithine from L-glutamate: step 2/4. In terms of biological role, catalyzes the ATP-dependent phosphorylation of N-acetyl-L-glutamate. This is Acetylglutamate kinase from Chromohalobacter salexigens (strain ATCC BAA-138 / DSM 3043 / CIP 106854 / NCIMB 13768 / 1H11).